Here is a 732-residue protein sequence, read N- to C-terminus: Cyclopenase asqI (732 aa).

Zn(2+) is bound by residues His-168, His-172, and His-200.

It belongs to the tyrosinase family. The cofactor is Zn(2+).

It carries out the reaction (-)-cyclopenine = viridicatin + methyl isocyanate + H(+). The catalysed reaction is (-)-4'-methoxycyclopenine = 4'-methoxyviridicatin + methyl isocyanate + H(+). It participates in secondary metabolite biosynthesis. It functions in the pathway alkaloid biosynthesis. Its pathway is mycotoxin biosynthesis. Cyclopenase; part of the gene cluster that mediates the biosynthesis of the aspoquinolone mycotoxins. Within the pathway, the cyclopenase asqI catalyzes the conversion of 4'-methoxycyclopenin into 4'-methoxyviridicatin. Cyclopenin can also be converted into viridicatin by asqI. The first step of the pathway is catalyzed by the nonribosomal peptide synthetase asqK that condenses anthranilic acid and O-methyl-L-tyrosine to produce 4'-methoxycyclopeptin. 4'-methoxycyclopeptin is then converted to 4'-methoxydehydrocyclopeptin by the ketoglutarate-dependent dioxygenase asqJ. AsqJ also converts its first product 4'-methoxydehydrocyclopeptin to 4'-methoxycyclopenin. The following conversion of 4'-methoxycyclopenin into 4'-methoxyviridicatin is catalyzed by the cyclopenase asqI. 4'-methoxyviridicatin is the precursor of quinolone natural products, and is further converted to quinolinone B. The prenyltransferase asqH1 then catalyzes the canonical Friedel-Crafts alkylation of quinolinone B with dimethylallyl cation to yield dimethylallyl quinolone, which is subjected to FAD-dependent dehydrogenation by the FAD-linked oxidoreductase asqF to yield conjugated aryl diene. The delta(3') double bond then serves as the site of the second alkylation with DMAPP catalyzed by the prenyltransferase asqH2 to yield a carbenium ion intermediate, which can be attacked by H(2)O to yield a styrenyl quinolone containing a C3'-hydroxyprenyl chain. The FAD-dependent monooxygenase asqG performs epoxidation of the terminal C7'-C8' olefin. Finally, after dehydratation of the epoxide at C3 by asqC, the quinolone epoxide rearrangement protein asqO catalyzes an enzymatic 3-exo-tet cyclization to yield the cyclopropyl-THF ring system in aspoquinolone. In Emericella nidulans (strain FGSC A4 / ATCC 38163 / CBS 112.46 / NRRL 194 / M139) (Aspergillus nidulans), this protein is Cyclopenase asqI.